The following is a 205-amino-acid chain: Non-specific lipid transfer protein GPI-anchored 21 (205 aa).

Positions 1–27 (MNSNSFLISAALIFSLLSSNSPTSILA) are cleaved as a signal peptide. 4 disulfide bridges follow: cysteine 33–cysteine 75, cysteine 44–cysteine 59, cysteine 60–cysteine 100, and cysteine 73–cysteine 109. Asparagine 89 carries N-linked (GlcNAc...) asparagine glycosylation. The tract at residues 116-182 (LPTPGPASFG…FAPPPPSSSP (67 aa)) is disordered. Over residues 126–156 (PTTSPTDSQTSDPEGSASFRPPTSPTTSQTP) the composition is skewed to low complexity. Serine 179 is lipidated: GPI-anchor amidated serine. The propeptide at 180–205 (SSPSSSHSLKLSYLLFAFAFTIIKFI) is removed in mature form.

This sequence belongs to the plant LTP family.

It localises to the cell membrane. Probable lipid transfer protein. This Arabidopsis thaliana (Mouse-ear cress) protein is Non-specific lipid transfer protein GPI-anchored 21.